A 92-amino-acid polypeptide reads, in one-letter code: Small ribosomal subunit protein uS19c (92 aa).

This sequence belongs to the universal ribosomal protein uS19 family.

It localises to the plastid. The protein localises to the chloroplast. Its function is as follows. Protein S19 forms a complex with S13 that binds strongly to the 16S ribosomal RNA. This Oedogonium cardiacum (Filamentous green alga) protein is Small ribosomal subunit protein uS19c.